The following is a 151-amino-acid chain: Ribonuclease H (151 aa).

The RNase H type-1 domain occupies 5-146 (ALPHVTIFTD…ADQLAREGVA (142 aa)). Aspartate 14, glutamate 52, aspartate 74, and aspartate 138 together coordinate Mg(2+).

The protein belongs to the RNase H family. Monomer. Requires Mg(2+) as cofactor.

It localises to the cytoplasm. The catalysed reaction is Endonucleolytic cleavage to 5'-phosphomonoester.. Endonuclease that specifically degrades the RNA of RNA-DNA hybrids. This chain is Ribonuclease H, found in Nitrobacter hamburgensis (strain DSM 10229 / NCIMB 13809 / X14).